We begin with the raw amino-acid sequence, 330 residues long: Diacylglycerol acyltransferase/mycolyltransferase Ag85A (330 aa).

Positions 1–42 are cleaved as a signal peptide; it reads MKFVDRFRGAVAGMLRRLVVEAMGVALLSALIGVVGSAPAEA. Residue 84-85 participates in substrate binding; the sequence is LR. Positions 100 to 110 are fibronectin-binding; sequence FEWYYQSGISV. Cys-129 and Cys-134 are disulfide-bonded. Substrate-binding residues include Ser-168 and Asp-196. Catalysis depends on Ser-168, which acts as the Nucleophile. Glu-272 is a catalytic residue. Residues 274 to 277, Lys-281, and 304 to 306 contribute to the substrate site; these read LVRT and HSW. Residue His-304 is part of the active site.

This sequence belongs to the mycobacterial A85 antigen family. Homodimer.

The protein resides in the secreted. It is found in the cell wall. It localises to the cytoplasm. It catalyses the reaction an acyl-CoA + a 1,2-diacyl-sn-glycerol = a triacyl-sn-glycerol + CoA. The catalysed reaction is 2 alpha,alpha'-trehalose 6-mycolate = alpha,alpha'-trehalose 6,6'-bismycolate + alpha,alpha-trehalose. Its function is as follows. The antigen 85 proteins (FbpA, FbpB, FbpC) are responsible for the high affinity of mycobacteria for fibronectin, a large adhesive glycoprotein, which facilitates the attachment of M.tuberculosis to murine alveolar macrophages (AMs). They also help to maintain the integrity of the cell wall by catalyzing the transfer of mycolic acids to cell wall arabinogalactan, and through the synthesis of alpha,alpha-trehalose dimycolate (TDM, cord factor). They catalyze the transfer of a mycoloyl residue from one molecule of alpha,alpha-trehalose monomycolate (TMM) to another TMM, leading to the formation of TDM. FbpA mediates triacylglycerol (TAG) formation with long-chain acyl-CoA as the acyl donor and 1,2-dipalmitoyl-sn-glycerol (1,2-dipalmitin) as the acyl acceptor. It has a preference for C26:0-CoA over C18:1-CoA. This Mycobacterium leprae (strain TN) protein is Diacylglycerol acyltransferase/mycolyltransferase Ag85A (fbpA).